The sequence spans 136 residues: Piercer of microtubule wall 1 protein (136 aa).

The segment at 1-24 (MAEECPRACAEPVAPKATAPPERT) is disordered.

This sequence belongs to the PIERCE1 family. In terms of assembly, microtubule inner protein component of sperm flagellar doublet microtubules. Interacts with CFAP53, ODAD1 and ODAD3; the interactions link the outer dynein arms docking complex (ODA-DC) to the internal microtubule inner proteins (MIP) in cilium axoneme. In terms of tissue distribution, expressed in airway epithelial cells.

The protein localises to the cytoplasm. Its subcellular location is the cytoskeleton. It is found in the cilium axoneme. It localises to the flagellum axoneme. Its function is as follows. Microtubule inner protein involved in the attachment of outer dynein arms (ODAs) to dynein-decorated doublet microtubules (DMTs) in cilia axoneme, which is required for motile cilia beating. Functions at the initial step of left-right asymmetry specification of the visceral organs. The chain is Piercer of microtubule wall 1 protein from Homo sapiens (Human).